The sequence spans 343 residues: Inositol 2-dehydrogenase 1 (343 aa).

This sequence belongs to the Gfo/Idh/MocA family. In terms of assembly, homotetramer.

It carries out the reaction myo-inositol + NAD(+) = scyllo-inosose + NADH + H(+). Functionally, involved in the oxidation of myo-inositol (MI) to 2-keto-myo-inositol (2KMI or 2-inosose). This is Inositol 2-dehydrogenase 1 from Mycolicibacterium vanbaalenii (strain DSM 7251 / JCM 13017 / BCRC 16820 / KCTC 9966 / NRRL B-24157 / PYR-1) (Mycobacterium vanbaalenii).